The chain runs to 137 residues: ATP synthase epsilon chain, chloroplastic (137 aa).

The protein belongs to the ATPase epsilon chain family. As to quaternary structure, F-type ATPases have 2 components, CF(1) - the catalytic core - and CF(0) - the membrane proton channel. CF(1) has five subunits: alpha(3), beta(3), gamma(1), delta(1), epsilon(1). CF(0) has three main subunits: a, b and c.

The protein resides in the plastid. The protein localises to the chloroplast thylakoid membrane. In terms of biological role, produces ATP from ADP in the presence of a proton gradient across the membrane. The chain is ATP synthase epsilon chain, chloroplastic from Hordeum vulgare (Barley).